We begin with the raw amino-acid sequence, 287 residues long: mRNA-capping enzyme small subunit (287 aa).

As to quaternary structure, heterodimer of a large and a small subunit.

It localises to the virion. The enzyme catalyses a 5'-end (5'-triphosphoguanosine)-ribonucleoside in mRNA + S-adenosyl-L-methionine = a 5'-end (N(7)-methyl 5'-triphosphoguanosine)-ribonucleoside in mRNA + S-adenosyl-L-homocysteine. Its function is as follows. Catalyzes the last reaction in the mRNA cap formation pathway. The polypeptide is mRNA-capping enzyme small subunit (Erythrocebus patas (Red guenon)).